Consider the following 351-residue polypeptide: 1-acylglycerol-3-phosphate O-acyltransferase ABHD5 (351 aa).

The AB hydrolase-1 domain maps to 79–184; the sequence is PLVLLHGFGG…LILVEPWGFP (106 aa). S124 carries the post-translational modification Phosphoserine. The short motif at 329–334 is the HXXXXD motif element; sequence HYVYAD.

This sequence belongs to the peptidase S33 family. ABHD4/ABHD5 subfamily. In terms of assembly, interacts with ADRP. Interacts with PLIN. Interacts with and PNPLA2. Interacts with PLIN5; promotes interaction with PNPLA2. Highly expressed in the adipose tissue and testes. Weakly expressed in the liver, muscle, kidney, and heart. Expressed by upper epidermal layers and dermal fibroblasts in skin, hepatocytes and hypothalamus in brain (at protein level).

The protein resides in the cytoplasm. It localises to the lipid droplet. Its subcellular location is the cytosol. The catalysed reaction is a 1-acyl-sn-glycero-3-phosphate + an acyl-CoA = a 1,2-diacyl-sn-glycero-3-phosphate + CoA. The enzyme catalyses 1-(9Z-octadecenoyl)-sn-glycero-3-phosphate + (9Z)-octadecenoyl-CoA = 1,2-di-(9Z-octadecenoyl)-sn-glycero-3-phosphate + CoA. It catalyses the reaction 1-(9Z-octadecenoyl)-sn-glycero-3-phosphate + hexadecanoyl-CoA = 1-(9Z)-octadecenoyl-2-hexadecanoyl-sn-glycero-3-phosphate + CoA. It carries out the reaction 1-(9Z-octadecenoyl)-sn-glycero-3-phosphate + octadecanoyl-CoA = 1-(9Z-octadecenoyl)-2-octadecanoyl-sn-glycero-3-phosphate + CoA. The catalysed reaction is 1-(9Z-octadecenoyl)-sn-glycero-3-phosphate + (5Z,8Z,11Z,14Z)-eicosatetraenoyl-CoA = 1-(9Z)-octadecenoyl-2-(5Z,8Z,11Z,14Z)-eicosatetraenoyl-sn-glycero-3-phosphate + CoA. The enzyme catalyses eicosanoyl-CoA + 1-(9Z-octadecenoyl)-sn-glycero-3-phosphate = 1-(9Z)-octadecenoyl-2-eicosanoyl-sn-glycero-3-phosphate + CoA. It catalyses the reaction 1-hexadecanoyl-sn-glycero-3-phosphate + (9Z)-octadecenoyl-CoA = 1-hexadecanoyl-2-(9Z-octadecenoyl)-sn-glycero-3-phosphate + CoA. It carries out the reaction 1-octadecanoyl-sn-glycero-3-phosphate + (9Z)-octadecenoyl-CoA = 1-octadecanoyl-2-(9Z-octadecenoyl)-sn-glycero-3-phosphate + CoA. The catalysed reaction is 1-(5Z,8Z,11Z,14Z-eicosatetraenoyl)-sn-glycero-3-phosphate + (9Z)-octadecenoyl-CoA = 1-(5Z,8Z,11Z,14Z)-eicosatetraenoyl-2-(9Z)-octadecenoyl-sn-glycero-3-phosphate + CoA. Acyltransferase activity is inhibited by detergents such as Triton X-100 and 3-[(3-cholamidopropyl)dimethylammonio]-1-propanesulfonate (CHAPS). Acyltransferase activity is inhibited by the presence of magnesium and calcium. Coenzyme A-dependent lysophosphatidic acid acyltransferase that catalyzes the transfer of an acyl group on a lysophosphatidic acid. Functions preferentially with 1-oleoyl-lysophosphatidic acid followed by 1-palmitoyl-lysophosphatidic acid, 1-stearoyl-lysophosphatidic acid and 1-arachidonoyl-lysophosphatidic acid as lipid acceptor. Functions preferentially with arachidonoyl-CoA followed by oleoyl-CoA as acyl group donors. Functions in phosphatidic acid biosynthesis. May regulate the cellular storage of triacylglycerol through activation of the phospholipase PNPLA2. Involved in keratinocyte differentiation. Regulates lipid droplet fusion. This chain is 1-acylglycerol-3-phosphate O-acyltransferase ABHD5, found in Mus musculus (Mouse).